Here is a 210-residue protein sequence, read N- to C-terminus: Putative cutinase (210 aa).

Over residues 26–38 (DSERLPLKRDEPG) the composition is skewed to basic and acidic residues. Residues 26–58 (DSERLPLKRDEPGSRSMRSTFIPSSQCSNLSSA) are disordered. A compositionally biased stretch (low complexity) spans 49 to 58 (SSQCSNLSSA).

The enzyme catalyses cutin + H2O = cutin monomers.. The sequence is that of Putative cutinase from Phytophthora capsici.